A 96-amino-acid chain; its full sequence is Co-chaperonin GroES (96 aa).

Belongs to the GroES chaperonin family. In terms of assembly, heptamer of 7 subunits arranged in a ring. Interacts with the chaperonin GroEL.

Its subcellular location is the cytoplasm. Its function is as follows. Together with the chaperonin GroEL, plays an essential role in assisting protein folding. The GroEL-GroES system forms a nano-cage that allows encapsulation of the non-native substrate proteins and provides a physical environment optimized to promote and accelerate protein folding. GroES binds to the apical surface of the GroEL ring, thereby capping the opening of the GroEL channel. The chain is Co-chaperonin GroES from Colwellia maris.